Here is a 404-residue protein sequence, read N- to C-terminus: Glucosyl-3-phosphoglycerate synthase (404 aa).

D146 contacts a divalent metal cation. Residue 188-190 (GRV) participates in (2R)-3-phosphoglycerate binding. Residue H270 participates in a divalent metal cation binding.

This sequence belongs to the glycosyltransferase 2 family. Mn(2+) serves as cofactor. Co(2+) is required as a cofactor. The cofactor is Mg(2+).

It catalyses the reaction an NDP-alpha-D-glucose + (2R)-3-phosphoglycerate = (2R)-2-O-(alpha-D-glucopyranosyl)-3-phospho-glycerate + a ribonucleoside 5'-diphosphate + H(+). Its function is as follows. Involved in the biosynthesis of 6-O-methylglucose lipopolysaccarides (MGLPs). Catalyzes the transfer of a glucose (Glc) moiety from uridine diphosphate (UDP-Glc) to the position 2 of 3-phospho-D-glycerate (3-PGA) to form glucosyl-3-phosphoglycerate (GPG). In Methanococcoides burtonii (strain DSM 6242 / NBRC 107633 / OCM 468 / ACE-M), this protein is Glucosyl-3-phosphoglycerate synthase.